Here is a 200-residue protein sequence, read N- to C-terminus: uncharacterized protein (200 aa).

An N-terminal signal peptide occupies residues 1–24 (MAIDKLPLLLFLSILLCLNRPVLS). N-linked (GlcNAc...) asparagine glycans are attached at residues N44, N72, N99, N124, and N135. The GPI-anchor amidated serine moiety is linked to residue S174. A propeptide spans 175–200 (NGFTFGIGLVSYLVIFMYSSFCFFLF) (removed in mature form).

It belongs to the UPF0277 family.

The protein localises to the cell membrane. This is an uncharacterized protein from Arabidopsis thaliana (Mouse-ear cress).